The primary structure comprises 62 residues: Small, acid-soluble spore protein H 1 (62 aa).

This sequence belongs to the SspH family.

The protein resides in the spore core. In Clostridium botulinum (strain ATCC 19397 / Type A), this protein is Small, acid-soluble spore protein H 1.